Reading from the N-terminus, the 61-residue chain is Truncated 3-beta hydroxy-5-ene steroid dehydrogenase homolog (61 aa).

The protein belongs to the 3-beta-HSD family.

The polypeptide is Truncated 3-beta hydroxy-5-ene steroid dehydrogenase homolog (Variola virus (isolate Human/India/Ind3/1967) (VARV)).